We begin with the raw amino-acid sequence, 519 residues long: Cytochrome P450 4A22 (519 aa).

Residues 1-4 constitute a propeptide that is removed on maturation; the sequence is MSVS. Residue glutamate 321 participates in heme binding. Position 440 is a phosphoserine (serine 440). Cysteine 457 serves as a coordination point for heme.

The protein belongs to the cytochrome P450 family.

The protein localises to the endoplasmic reticulum membrane. The protein resides in the microsome membrane. The catalysed reaction is an omega-methyl-long-chain fatty acid + reduced [NADPH--hemoprotein reductase] + O2 = an omega-hydroxy-long-chain fatty acid + oxidized [NADPH--hemoprotein reductase] + H2O + H(+). In terms of biological role, catalyzes the omega- and (omega-1)-hydroxylation of various fatty acids such as laurate and palmitate. Shows no activity towards arachidonic acid and prostaglandin A1. Lacks functional activity in the kidney and does not contribute to renal 20-hydroxyeicosatetraenoic acid (20-HETE) biosynthesis. The protein is Cytochrome P450 4A22 (CYP4A22) of Homo sapiens (Human).